The sequence spans 27 residues: AITAGALQPGRLSVHREPWGFSREQAV.

The tract at residues His-15–Phe-21 is important for interaction with SLC2A1 and SLC2A3.

Interacts with glucose transporters SLC2A1/GLUT1 and SLC2A3/GLUT3; the interactions may promote SLC2A1- and SLC2A3-mediated glucose transport to meet the energy needs of mesendoderm differentiation.

The protein resides in the cell membrane. Functionally, required for mesendoderm differentiation. Interacts with glucose transporters and promotes glucose uptake. Probably augments the glucose uptake capacity of glucose transporter proteins to meet the energy needs of mesendoderm differentiation. This is Small integral membrane protein 43 from Pongo abelii (Sumatran orangutan).